The chain runs to 81 residues: Protein Vpu (81 aa).

Over 1-7 (MQSLQIL) the chain is Extracellular. Residues 8–28 (AIVSLVVVAIIAIVVWTIVLI) form a helical membrane-spanning segment. Residues 29–81 (EYRKILRQRKIDRLFDRIREKAEDSGNESERDQEELSALVEMGHLAPWDVDDL) are Cytoplasmic-facing. Ser53 and Ser57 each carry phosphoserine; by host CK2.

The protein belongs to the HIV-1 VPU protein family. Homopentamer. Interacts with host CD4 and BRTC; these interactions induce proteasomal degradation of CD4. Interacts with host BST2; this interaction leads to the degradation of host BST2. Interacts with host FBXW11. Interacts with host AP1M1; this interaction plays a role in the mistrafficking and subsequent degradation of host BST2. Interacts with host RANBP2; this interaction allows Vpu to down-regulate host BLM sumoylation. Phosphorylated by host CK2. This phosphorylation is necessary for interaction with human BTRC and degradation of CD4.

The protein localises to the host membrane. Ion channel activity is inhibited by hexamethylene amiloride in vitro. In terms of biological role, enhances virion budding by targeting host CD4 and Tetherin/BST2 to proteasome degradation. Degradation of CD4 prevents any unwanted premature interactions between viral Env and its host receptor CD4 in the endoplasmic reticulum. Degradation of antiretroviral protein Tetherin/BST2 is important for virion budding, as BST2 tethers new viral particles to the host cell membrane. Mechanistically, Vpu bridges either CD4 or BST2 to BTRC, a substrate recognition subunit of the Skp1/Cullin/F-box protein E3 ubiquitin ligase, induces their ubiquitination and subsequent proteasomal degradation. The alteration of the E3 ligase specificity by Vpu seems to promote the degradation of host IKBKB, leading to NF-kappa-B down-regulation and subsequent apoptosis. Acts as a viroporin that forms an oligomeric ion channel in membranes. Modulates the host DNA repair mechanisms to promote degradation of nuclear viral cDNA in cells that are already productively infected in order to suppress immune sensing and proviral hyper-integration (superinfection). Manipulates PML-NBs and modulates SUMOylation of host BLM protein thereby enhancing its DNA-end processing activity toward viral unintegrated linear DNA. Also inhibits RAD52-mediated homologous repair of viral cDNA, preventing the generation of dead-end circular forms of single copies of the long terminal repeat and permitting sustained nucleolytic attack. In Homo sapiens (Human), this protein is Protein Vpu.